The sequence spans 208 residues: Pectinesterase inhibitor 6 (208 aa).

A signal peptide spans 1-30 (MTSSSSSPITFTLLLLLSLLVALNPNPSLA). A disulfide bridge connects residues Cys-53 and Cys-62. N-linked (GlcNAc...) asparagine glycosylation is found at Asn-54 and Asn-75. Cys-118 and Cys-165 are joined by a disulfide.

It belongs to the PMEI family.

Its subcellular location is the secreted. The protein localises to the extracellular space. It localises to the apoplast. In terms of biological role, pectin methylesterase (PME) inhibitor that targets PME from seeds and modulates PME activity and pectin methylesterification during seed germination. Promotes mucilage release by limiting methylesterification of homogalacturonan in seed coat epidermal cells. The polypeptide is Pectinesterase inhibitor 6 (Arabidopsis thaliana (Mouse-ear cress)).